The primary structure comprises 435 residues: Maltodextrin transport system permease protein MalC (435 aa).

The next 10 helical transmembrane spans lie at Gly-34 to Pro-54, Phe-73 to Phe-93, Tyr-130 to Val-150, Ile-199 to Ile-219, Ile-230 to Phe-250, Thr-263 to Trp-283, Leu-294 to Leu-314, Asn-338 to Phe-358, Gly-371 to Ile-391, and Met-404 to Phe-424. One can recognise an ABC transmembrane type-1 domain in the interval Leu-195–Ala-423.

The protein belongs to the binding-protein-dependent transport system permease family. MalFG subfamily.

The protein localises to the cell membrane. Functionally, part of the binding-protein-dependent transport system for maltodextrin; probably responsible for the translocation of the substrate across the membrane. The chain is Maltodextrin transport system permease protein MalC (malC) from Streptococcus pneumoniae serotype 4 (strain ATCC BAA-334 / TIGR4).